The primary structure comprises 386 residues: Eukaryotic translation initiation factor 3 subunit M (386 aa).

Residues 181-343 (NSELASKVMI…RKVHISSTMH (163 aa)) enclose the PCI domain.

Belongs to the eIF-3 subunit M family. In terms of assembly, component of the eukaryotic translation initiation factor 3 (eIF-3) complex.

The protein localises to the cytoplasm. In terms of biological role, component of the eukaryotic translation initiation factor 3 (eIF-3) complex, which is involved in protein synthesis of a specialized repertoire of mRNAs and, together with other initiation factors, stimulates binding of mRNA and methionyl-tRNAi to the 40S ribosome. The eIF-3 complex specifically targets and initiates translation of a subset of mRNAs involved in cell proliferation. This is Eukaryotic translation initiation factor 3 subunit M from Aedes aegypti (Yellowfever mosquito).